The following is a 443-amino-acid chain: Putative phosphoribosyl transferase MT0597 (443 aa).

This sequence in the N-terminal section; belongs to the purine/pyrimidine phosphoribosyltransferase family. The protein in the C-terminal section; belongs to the dienelactone hydrolase family.

This is Putative phosphoribosyl transferase MT0597 from Mycobacterium tuberculosis (strain CDC 1551 / Oshkosh).